A 273-amino-acid chain; its full sequence is 4-hydroxy-tetrahydrodipicolinate reductase (273 aa).

NAD(+)-binding positions include 12–17 and Glu-38; that span reads GAGGRM. Arg-39 serves as a coordination point for NADP(+). NAD(+) is bound by residues 102–104 and 126–129; these read GTT and AANF. The active-site Proton donor/acceptor is the His-159. His-160 serves as a coordination point for (S)-2,3,4,5-tetrahydrodipicolinate. Lys-163 serves as the catalytic Proton donor. 169–170 is a binding site for (S)-2,3,4,5-tetrahydrodipicolinate; it reads GT.

The protein belongs to the DapB family. In terms of assembly, homotetramer.

The protein localises to the cytoplasm. It carries out the reaction (S)-2,3,4,5-tetrahydrodipicolinate + NAD(+) + H2O = (2S,4S)-4-hydroxy-2,3,4,5-tetrahydrodipicolinate + NADH + H(+). The catalysed reaction is (S)-2,3,4,5-tetrahydrodipicolinate + NADP(+) + H2O = (2S,4S)-4-hydroxy-2,3,4,5-tetrahydrodipicolinate + NADPH + H(+). Its pathway is amino-acid biosynthesis; L-lysine biosynthesis via DAP pathway; (S)-tetrahydrodipicolinate from L-aspartate: step 4/4. Its function is as follows. Catalyzes the conversion of 4-hydroxy-tetrahydrodipicolinate (HTPA) to tetrahydrodipicolinate. The protein is 4-hydroxy-tetrahydrodipicolinate reductase of Salmonella gallinarum (strain 287/91 / NCTC 13346).